The primary structure comprises 274 residues: Penicillin-insensitive murein endopeptidase (274 aa).

Residues Met-1–Ala-19 form the signal peptide. Cystine bridges form between Cys-44–Cys-265, Cys-187–Cys-235, and Cys-216–Cys-223. 6 residues coordinate Zn(2+): His-110, His-113, Asp-120, Asp-147, His-150, and His-211. The disordered stretch occupies residues Asp-225–Leu-274.

It belongs to the peptidase M74 family. Dimer. Zn(2+) serves as cofactor.

It localises to the periplasm. Its function is as follows. Murein endopeptidase that cleaves the D-alanyl-meso-2,6-diamino-pimelyl amide bond that connects peptidoglycan strands. Likely plays a role in the removal of murein from the sacculus. In Salmonella arizonae (strain ATCC BAA-731 / CDC346-86 / RSK2980), this protein is Penicillin-insensitive murein endopeptidase.